The chain runs to 483 residues: NADH-quinone oxidoreductase subunit N (483 aa).

Helical transmembrane passes span 11 to 31, 37 to 57, 82 to 100, 110 to 130, 164 to 184, 205 to 225, 239 to 259, 268 to 288, 301 to 321, 329 to 349, 372 to 392, 406 to 426, and 446 to 466; these read ALPE…DLFL, SLIY…TACT, LMMY…QYVS, FALT…QHFL, FVLG…LYGV, AVLV…LGAV, PTAV…AFMI, VLAI…ILIG, MLAY…MSAG, MFYI…MLLL, YAFL…TLGF, GFVG…FYYL, and PIDM…LGMF.

It belongs to the complex I subunit 2 family. As to quaternary structure, NDH-1 is composed of 14 different subunits. Subunits NuoA, H, J, K, L, M, N constitute the membrane sector of the complex.

The protein localises to the cell inner membrane. It catalyses the reaction a quinone + NADH + 5 H(+)(in) = a quinol + NAD(+) + 4 H(+)(out). In terms of biological role, NDH-1 shuttles electrons from NADH, via FMN and iron-sulfur (Fe-S) centers, to quinones in the respiratory chain. The immediate electron acceptor for the enzyme in this species is believed to be ubiquinone. Couples the redox reaction to proton translocation (for every two electrons transferred, four hydrogen ions are translocated across the cytoplasmic membrane), and thus conserves the redox energy in a proton gradient. The polypeptide is NADH-quinone oxidoreductase subunit N (Methylovorus glucosotrophus (strain SIP3-4)).